Reading from the N-terminus, the 358-residue chain is 3-dehydroquinate synthase (358 aa).

NAD(+) is bound by residues 75–80 (SGEGSK), 109–113 (GVLGD), 133–134 (TT), lysine 146, and lysine 155. Residues glutamate 188, histidine 245, and histidine 262 each coordinate Zn(2+).

Belongs to the sugar phosphate cyclases superfamily. Dehydroquinate synthase family. Co(2+) is required as a cofactor. Zn(2+) serves as cofactor. The cofactor is NAD(+).

The protein localises to the cytoplasm. The enzyme catalyses 7-phospho-2-dehydro-3-deoxy-D-arabino-heptonate = 3-dehydroquinate + phosphate. It functions in the pathway metabolic intermediate biosynthesis; chorismate biosynthesis; chorismate from D-erythrose 4-phosphate and phosphoenolpyruvate: step 2/7. Functionally, catalyzes the conversion of 3-deoxy-D-arabino-heptulosonate 7-phosphate (DAHP) to dehydroquinate (DHQ). The polypeptide is 3-dehydroquinate synthase (Methylacidiphilum infernorum (isolate V4) (Methylokorus infernorum (strain V4))).